Consider the following 220-residue polypeptide: Zip homologous protein 1 (220 aa).

Residues 6-44 form an RING-type zinc finger; that stretch reads CNGCGCSPSKRQFFITACSHVFCETCRTTPTADFCHLCK. Residues 124 to 155 are a coiled coil; the sequence is LTSFEENNRKKLEDIERENEKLRNLISALELK. Disordered regions lie at residues 166-186 and 201-220; these read EFFMQGTPTSSNPSVAGSDVD and RSDSSSSNCSSQSNRGGSLF. The segment covering 171 to 180 has biased composition (polar residues); sequence GTPTSSNPSV.

In terms of assembly, interacts with zhp-2; the interaction is required for their chromosome association and stability. As to expression, expressed in the germline.

The protein resides in the chromosome. Functionally, recruited co-dependently with zhp-2 to the synaptonemal complex between homologous chromosome pairs to regulate the formation and number of crossover events between homologs during meiotic recombination. Together with zhp-2, promotes the accumulation of pro-crossover proteins, including zhp-3 and zhp-4, at a designated crossover site along the recombination intermediate. Limits the number of crossover sites along a recombination intermediate by restricting the association of these pro-crossover proteins with other recombination sites during late prophase. Also, together with zhp-2, plays a role in chromosome remodeling following crossover formation to promote two successive rounds of chromosome segregation during meiosis. The sequence is that of Zip homologous protein 1 from Caenorhabditis elegans.